We begin with the raw amino-acid sequence, 614 residues long: UvrABC system protein C (614 aa).

In terms of domain architecture, GIY-YIG spans 26–104; it reads NLPGVYKMLG…IKEYRPPYNV (79 aa). The region spanning 215 to 250 is the UVR domain; that stretch reads SDIHTALIEKMEASAEELDFEKAVFYRDQLSMLREV.

The protein belongs to the UvrC family. In terms of assembly, interacts with UvrB in an incision complex.

The protein localises to the cytoplasm. The UvrABC repair system catalyzes the recognition and processing of DNA lesions. UvrC both incises the 5' and 3' sides of the lesion. The N-terminal half is responsible for the 3' incision and the C-terminal half is responsible for the 5' incision. The polypeptide is UvrABC system protein C (Psychrobacter cryohalolentis (strain ATCC BAA-1226 / DSM 17306 / VKM B-2378 / K5)).